A 511-amino-acid polypeptide reads, in one-letter code: Sporulation-specific chitinase 2 (511 aa).

A signal peptide spans 1–34 (MVGHSAQHRSKSSLVSHLLILLIFITIIIEMCLY). Positions 73-472 (FISGVYYSNW…NAFNEGLHFN (400 aa)) constitute a GH18 domain. Asn147 carries N-linked (GlcNAc...) asparagine glycosylation. Residue Glu223 is the Proton donor of the active site. Residues Asn228, Asn456, and Asn472 are each glycosylated (N-linked (GlcNAc...) asparagine).

This sequence belongs to the glycosyl hydrolase 18 family. Chitinase class III subfamily.

It localises to the secreted. It catalyses the reaction Random endo-hydrolysis of N-acetyl-beta-D-glucosaminide (1-&gt;4)-beta-linkages in chitin and chitodextrins.. In Saccharomyces cerevisiae (strain ATCC 204508 / S288c) (Baker's yeast), this protein is Sporulation-specific chitinase 2 (CTS2).